Consider the following 379-residue polypeptide: MASLRKSHPLLKIANNALVDLPAPINISAWWNFGSLLGLCLIAQILTGLFLAMHYTSDISTAFSSVAHICRDVNYGWLIRNMHANGASFFFICIYLHIGRGLYYGSYLYKETWNVGVVLLLLVMMTAFVGYVLPWGQMSFWGATVITNLLSAVPYMGDTLVQWIWGGFSVDNATLTRFFAFHFLLPFIGAAATLVHLIFLHETGSNNPTGLNSDADKISFHPYFSYKDILGFTFLLTALIALALFSPNLLGDPENFTPANPLVTPPHIKPEWYFLFAYAILRSIPNKLGGVLALLASILVLMVVPLLHTSKQRSLTFRPFTQVLFWLLIADVAILTWIGGMPVEHPFIIIGQVASFLYFSLFLVLAPTAAWMENKILGW.

4 consecutive transmembrane segments (helical) span residues 33 to 53, 77 to 98, 113 to 133, and 178 to 198; these read FGSL…FLAM, WLIR…YLHI, WNVG…GYVL, and FFAF…VHLI. Residues histidine 83 and histidine 97 each coordinate heme b. Residues histidine 182 and histidine 196 each coordinate heme b. Histidine 201 contributes to the a ubiquinone binding site. The next 4 membrane-spanning stretches (helical) occupy residues 226–246, 288–308, 320–340, and 347–367; these read YKDI…ALFS, LGGV…PLLH, FTQV…WIGG, and FIII…VLAP.

Belongs to the cytochrome b family. The cytochrome bc1 complex contains 3 respiratory subunits (MT-CYB, CYC1 and UQCRFS1), 2 core proteins (UQCRC1 and UQCRC2) and probably 6 low-molecular weight proteins. The cofactor is heme b.

It is found in the mitochondrion inner membrane. Its function is as follows. Component of the ubiquinol-cytochrome c reductase complex (complex III or cytochrome b-c1 complex) that is part of the mitochondrial respiratory chain. The b-c1 complex mediates electron transfer from ubiquinol to cytochrome c. Contributes to the generation of a proton gradient across the mitochondrial membrane that is then used for ATP synthesis. The polypeptide is Cytochrome b (mt-cyb) (Poeciliopsis occidentalis (Gila topminnow)).